Consider the following 359-residue polypeptide: Chorismate synthase (359 aa).

Residue Arg47 coordinates NADP(+). Residues 123–125, Gly283, 298–302, and Arg326 each bind FMN; these read RSS and KPTSS.

Belongs to the chorismate synthase family. In terms of assembly, homotetramer. Requires FMNH2 as cofactor.

It catalyses the reaction 5-O-(1-carboxyvinyl)-3-phosphoshikimate = chorismate + phosphate. It participates in metabolic intermediate biosynthesis; chorismate biosynthesis; chorismate from D-erythrose 4-phosphate and phosphoenolpyruvate: step 7/7. In terms of biological role, catalyzes the anti-1,4-elimination of the C-3 phosphate and the C-6 proR hydrogen from 5-enolpyruvylshikimate-3-phosphate (EPSP) to yield chorismate, which is the branch point compound that serves as the starting substrate for the three terminal pathways of aromatic amino acid biosynthesis. This reaction introduces a second double bond into the aromatic ring system. This chain is Chorismate synthase, found in Chlamydia felis (strain Fe/C-56) (Chlamydophila felis).